The chain runs to 346 residues: Parapinopsin (346 aa).

Residues 1-29 (MASIILINFSETDTLHLGSVNDHIMPRIG) lie on the Extracellular side of the membrane. Residue asparagine 8 is glycosylated (N-linked (GlcNAc...) asparagine). Residues 30–54 (YTILSIIMALSSTFGIILNMVVIIV) form a helical membrane-spanning segment. At 55–66 (TVRYKQLRQPLN) the chain is on the cytoplasmic side. Residues 67-91 (YALVNLAVADLGCPVFGGLLTAVTN) form a helical membrane-spanning segment. The Extracellular segment spans residues 92-106 (AMGYFSLGRVGCVLE). A disulfide bond links cysteine 103 and cysteine 180. Residues 107-126 (GFAVAFFGIAGLCSVAVIAV) traverse the membrane as a helical segment. Topologically, residues 127-145 (DRYMVVCRPLGAVMFQTKH) are cytoplasmic. A helical membrane pass occupies residues 146 to 169 (ALAGVVFSWVWSFIWNTPPLFGWG). Over 170 to 193 (SYQLEGVMTSCAPNWYRRDPVNVS) the chain is Extracellular. Asparagine 191 is a glycosylation site (N-linked (GlcNAc...) asparagine). The chain crosses the membrane as a helical span at residues 194–221 (YILCYFMLCFALPFATIIFSYMHLLHTL). The Cytoplasmic segment spans residues 222 to 244 (WQVAKLQVADSGSTAKVEVQVAR). The chain crosses the membrane as a helical span at residues 245–268 (MVVIMVMAFLLTWLPYAAFALTVI). The Extracellular segment spans residues 269-276 (IDSNIYIN). Residues 277–301 (PVIGTIPAYLAKSSTVFNPIIYIFM) form a helical membrane-spanning segment. Residue lysine 288 is modified to N6-(retinylidene)lysine. The Cytoplasmic portion of the chain corresponds to 302–346 (NRQFRDYALPCLLCGKNPWAAKEGRDSDTNTLTTTVSKNTSVSPL). Cysteine 315 carries the S-palmitoyl cysteine lipid modification. Residues 325 to 346 (GRDSDTNTLTTTVSKNTSVSPL) form a disordered region. Residues 330–346 (TNTLTTTVSKNTSVSPL) are compositionally biased toward low complexity.

The protein belongs to the G-protein coupled receptor 1 family. Opsin subfamily. In terms of processing, phosphorylated on some or all of the serine and threonine residues present in the C-terminal region. In terms of tissue distribution, parapineal organ.

The protein localises to the membrane. This Ictalurus punctatus (Channel catfish) protein is Parapinopsin.